We begin with the raw amino-acid sequence, 378 residues long: uncharacterized protein (378 aa).

The span at 1-11 (MSPMNRQRKNK) shows a compositional bias: basic residues. Residues 1-23 (MSPMNRQRKNKSNVLNEKDERPG) form a disordered region.

This is an uncharacterized protein from Caenorhabditis elegans.